A 141-amino-acid polypeptide reads, in one-letter code: MLMPKRVKYRKQQRGHNRGMAHRGNTVAFGEYGLMAIEATWMTSRQIEAARRAISHHVKRGGKIWIRIFPDKPVTAKPAETRMGSGKGAVDHYVAVIKPGRILFELAGVRPEIAHEALERAAQKLPIKCKIVAREDLEGAA.

The tract at residues 1-21 (MLMPKRVKYRKQQRGHNRGMA) is disordered.

This sequence belongs to the universal ribosomal protein uL16 family. Part of the 50S ribosomal subunit.

Its function is as follows. Binds 23S rRNA and is also seen to make contacts with the A and possibly P site tRNAs. The polypeptide is Large ribosomal subunit protein uL16 (Roseiflexus castenholzii (strain DSM 13941 / HLO8)).